The following is a 695-amino-acid chain: Hypersensitivity response secretion protein HrpI (695 aa).

Transmembrane regions (helical) follow at residues 21-38 (LVGA…ITPL), 45-61 (VLIA…IMLA), 68-92 (LAFS…VSTT), 111-135 (FVVG…FLVI), 203-223 (AIAS…IGVL), 244-262 (GLIA…GMII), and 311-327 (VFIT…LLQL).

The protein belongs to the FHIPEP (flagella/HR/invasion proteins export pore) family.

It localises to the cell inner membrane. Functionally, involved in the secretion of harpin-pss; a proteinaceous elicitor of the hypersensitivity response in plants. The polypeptide is Hypersensitivity response secretion protein HrpI (hrpI) (Pseudomonas syringae pv. syringae).